The following is a 678-amino-acid chain: Growth arrest-specific protein 6 (678 aa).

A signal peptide spans 1–30; it reads MAPSLSPGPAALRRAPQLLLLLLAAECALA. The region spanning 53–94 is the Gla domain; it reads FEEAKQGHLERECVEELCSREEAREVFENDPETDYFYPRYLD. A disulfide bond links Cys65 and Cys70. The residue at position 71 (Ser71) is a Phosphoserine; by FAM20C. In terms of domain architecture, EGF-like 1; calcium-binding spans 116 to 154; that stretch reads LPDQCTPNPCDRKGTQACQDLMGNFFCLCKAGWGGRLCD. Disulfide bonds link Cys120–Cys133, Cys125–Cys142, Cys144–Cys153, Cys160–Cys171, Cys167–Cys180, Cys182–Cys195, Cys201–Cys212, Cys207–Cys221, Cys223–Cys236, Cys242–Cys251, Cys247–Cys260, Cys262–Cys277, Cys283–Cys570, and Cys444–Cys470. One can recognise an EGF-like 2; calcium-binding domain in the interval 156–196; that stretch reads DVNECSQENGGCLQICHNKPGSFHCSCHSGFELSSDGRTCQ. In terms of domain architecture, EGF-like 3; calcium-binding spans 197-237; sequence DIDECADSEACGEARCKNLPGSYSCLCDEGFAYSSQEKACR. Positions 238-278 constitute an EGF-like 4; calcium-binding domain; sequence DVDECLQGRCEQVCVNSPGSYTCHCDGRGGLKLSQDMDTCE. 2 consecutive Laminin G-like domains span residues 298 to 470 and 477 to 670; these read GRMF…RMQC and GSFY…AHSC. The Ca(2+) site is built by Asp329 and Glu331. N-linked (GlcNAc...) asparagine glycosylation occurs at Asn420. Arg440 serves as a coordination point for Ca(2+). Phosphothreonine is present on residues Thr621 and Thr637. Position 640 is a phosphotyrosine (Tyr640). Residues Cys643 and Cys670 are joined by a disulfide bond. Residue Asp656 coordinates Ca(2+).

Heterodimer and heterotetramer with AXL. Post-translationally, proteolytically processed after secretion to yield a N-terminal 36 kDa protein and a C-terminal 50 kDa protein including the laminin G-like domains which activates AXL. In terms of processing, gamma-carboxyglutamate residues are formed by vitamin K dependent carboxylation. These residues are essential for the binding of calcium. Plasma. Isoform 1 and isoform 2 are widely expressed, isoform 1 being expressed at higher levels than isoform 2 in most tissues. Isoform 2 is the predominant form in spleen.

The protein localises to the secreted. Its function is as follows. Ligand for tyrosine-protein kinase receptors AXL, TYRO3 and MER whose signaling is implicated in cell growth and survival, cell adhesion and cell migration. GAS6/AXL signaling plays a role in various processes such as endothelial cell survival during acidification by preventing apoptosis, optimal cytokine signaling during human natural killer cell development, hepatic regeneration, gonadotropin-releasing hormone neuron survival and migration, platelet activation, or regulation of thrombotic responses. In terms of biological role, (Microbial infection) Can bridge virus envelope phosphatidylserine to the TAM receptor tyrosine kinase Axl to mediate viral entry by apoptotic mimicry. Plays a role in Dengue cell entry by apoptotic mimicry. Plays a role in Vaccinia virus cell entry by apoptotic mimicry. Plays a role in ebolavirus and marburgvirus cell entry by apoptotic mimicry. This is Growth arrest-specific protein 6 from Homo sapiens (Human).